We begin with the raw amino-acid sequence, 330 residues long: MSDLAIPTISCTESDGKYGRFVVEPLEKGFGTTMGNSLRRILLSYLDGVAITRVRIDGIQHEFCALPKAKEDTLDFLLNLKNIRVESLSGLEGILYLRASGSKVVTAADIEPSNDFEVVNPELYLLTLDSDDAVLNVELEVELGRGYRPPESAENTPIGTIPVDAIFTPIRKVNFTTEPMHVGRETSLERLVLEVWTDGTVEPATAVSRSADILVKQFASLVSHSKVVAEIEASEPVKYTIPEEKYNMPIEQLDLSVRAVNCLRHAGITTVGEVINRGTKELLTLRNFGLKSLTELEDRLKTIGLSLNPEDELFEEAENNKKKNKGIDED.

Residues 1 to 225 form an alpha N-terminal domain (alpha-NTD) region; sequence MSDLAIPTIS…KQFASLVSHS (225 aa). The segment at 237 to 330 is alpha C-terminal domain (alpha-CTD); the sequence is VKYTIPEEKY…KKKNKGIDED (94 aa).

Belongs to the RNA polymerase alpha chain family. In terms of assembly, homodimer. The RNAP catalytic core consists of 2 alpha, 1 beta, 1 beta' and 1 omega subunit. When a sigma factor is associated with the core the holoenzyme is formed, which can initiate transcription.

The enzyme catalyses RNA(n) + a ribonucleoside 5'-triphosphate = RNA(n+1) + diphosphate. DNA-dependent RNA polymerase catalyzes the transcription of DNA into RNA using the four ribonucleoside triphosphates as substrates. The sequence is that of DNA-directed RNA polymerase subunit alpha from Dehalococcoides mccartyi (strain CBDB1).